Consider the following 339-residue polypeptide: Tetraacyldisaccharide 4'-kinase (339 aa).

ATP is bound at residue 58–65 (NVGGVGKT).

The protein belongs to the LpxK family.

It carries out the reaction a lipid A disaccharide + ATP = a lipid IVA + ADP + H(+). Its pathway is glycolipid biosynthesis; lipid IV(A) biosynthesis; lipid IV(A) from (3R)-3-hydroxytetradecanoyl-[acyl-carrier-protein] and UDP-N-acetyl-alpha-D-glucosamine: step 6/6. Its function is as follows. Transfers the gamma-phosphate of ATP to the 4'-position of a tetraacyldisaccharide 1-phosphate intermediate (termed DS-1-P) to form tetraacyldisaccharide 1,4'-bis-phosphate (lipid IVA). The protein is Tetraacyldisaccharide 4'-kinase of Chromobacterium violaceum (strain ATCC 12472 / DSM 30191 / JCM 1249 / CCUG 213 / NBRC 12614 / NCIMB 9131 / NCTC 9757 / MK).